The sequence spans 243 residues: 1-(5-phosphoribosyl)-5-[(5-phosphoribosylamino)methylideneamino] imidazole-4-carboxamide isomerase (243 aa).

The Proton acceptor role is filled by D10. The active-site Proton donor is D129.

It belongs to the HisA/HisF family.

It is found in the cytoplasm. It carries out the reaction 1-(5-phospho-beta-D-ribosyl)-5-[(5-phospho-beta-D-ribosylamino)methylideneamino]imidazole-4-carboxamide = 5-[(5-phospho-1-deoxy-D-ribulos-1-ylimino)methylamino]-1-(5-phospho-beta-D-ribosyl)imidazole-4-carboxamide. It functions in the pathway amino-acid biosynthesis; L-histidine biosynthesis; L-histidine from 5-phospho-alpha-D-ribose 1-diphosphate: step 4/9. This is 1-(5-phosphoribosyl)-5-[(5-phosphoribosylamino)methylideneamino] imidazole-4-carboxamide isomerase from Nocardia farcinica (strain IFM 10152).